The chain runs to 358 residues: MLDRLQYVKQRFDEISDLIIQPDVISDQKRYKSLNQEYKGIKALVEKREEYIIVLANIDEANEIIADGSDAEMVEMAKMQLDEAKDRLPELEEEIKFMLIPKDPEDAKNVMVEIRAGTGGDEASIFAGDLFRMYTKYCETMGWRTSVVDMNEGTSGGFKEVIFEVTGEDVYGTLKFEAGVHRVQRVPQTETQGRVHTSAATVMVLPEAEEFDVQVDMNDVRVDFFCSSGPGGQSVNTTKSAVRLTHIPTGLVAQCQDEKSQHKNKDKALMVLRSRLYEMELAKKQEEDAKKRSSQVSSGDRSAKIRTYNYAQGRVTDHRVGLTLYDLGNIMNGDIQKIVSELQLVNNMEKLKEASEVY.

Glutamine 233 carries the N5-methylglutamine modification.

This sequence belongs to the prokaryotic/mitochondrial release factor family. Post-translationally, methylated by PrmC. Methylation increases the termination efficiency of RF1.

It is found in the cytoplasm. Its function is as follows. Peptide chain release factor 1 directs the termination of translation in response to the peptide chain termination codons UAG and UAA. In Flavobacterium johnsoniae (strain ATCC 17061 / DSM 2064 / JCM 8514 / BCRC 14874 / CCUG 350202 / NBRC 14942 / NCIMB 11054 / UW101) (Cytophaga johnsonae), this protein is Peptide chain release factor 1.